The following is a 228-amino-acid chain: UPF0758 protein NT01CX_1687 (228 aa).

One can recognise an MPN domain in the interval 106–228 (IIKSPGDVAG…YISLKEKNIL (123 aa)). H177, H179, and D190 together coordinate Zn(2+). Positions 177–190 (HNHPSGDPTPSSED) match the JAMM motif motif.

This sequence belongs to the UPF0758 family.

This is UPF0758 protein NT01CX_1687 from Clostridium novyi (strain NT).